The primary structure comprises 441 residues: Nucleolar and spindle-associated protein 1 (441 aa).

2 disordered regions span residues 47 to 186 (ARKG…PNFK) and 216 to 267 (MNEL…LGLK). Polar residues-rich tracts occupy residues 56 to 74 (ESQT…ISNQ) and 100 to 116 (DSQQ…PTEF). A compositionally biased stretch (basic and acidic residues) spans 117-126 (QNHEKQESQD). S124 bears the Phosphoserine; by ATM mark. At S135 the chain carries Phosphoserine. Residues 152 to 171 (RDSKVPSEGKKSLYTDESSK) show a composition bias toward basic and acidic residues. The residue at position 182 (T182) is a Phosphothreonine. Residues 237-382 (GRLSVASTPI…HKGKLKPWGQ (146 aa)) are interaction with microtubules. Phosphoserine is present on S240. Residues 241–264 (VASTPISQRRSQGRSCGPASQSTL) are compositionally biased toward polar residues. T244 carries the post-translational modification Phosphothreonine. A phosphoserine mark is found at S247, S255, S269, S276, and S311. The interval 286 to 319 (AATKDNEHKRSLTKTPARKSAHVTVSGGTPKGEA) is disordered. Residues T314, T338, and T349 each carry the phosphothreonine modification. 2 positions are modified to phosphoserine: S352 and S363. The KEN box signature appears at 384 to 390 (KENNYLN). The tract at residues 401 to 427 (KTYKQPHLQTKEEQRKKREQERKEKKA) is disordered. Residues 407-432 (HLQTKEEQRKKREQERKEKKAKVLGM) adopt a coiled-coil conformation. Residues 409-424 (QTKEEQRKKREQERKE) are compositionally biased toward basic and acidic residues. An N6-acetyllysine modification is found at K411.

The protein belongs to the NUSAP family. Interacts with DNA and microtubules. Microtubule bundling is inhibited by IPO7, KPNA2 and KPNB1 while association with DNA is also inhibited by IPO7 and KPNA2. Ubiquitinated. Ubiquitination by FZR1 may lead to proteasome-dependent degradation of this protein. In terms of processing, phosphorylation by ATM in G2/M-phase induces mitotic arrest.

The protein localises to the cytoplasm. The protein resides in the nucleus. It is found in the nucleolus. It localises to the cytoskeleton. Its subcellular location is the spindle. The protein localises to the chromosome. Microtubule-associated protein with the capacity to bundle and stabilize microtubules. May associate with chromosomes and promote the organization of mitotic spindle microtubules around them. The chain is Nucleolar and spindle-associated protein 1 (NUSAP1) from Homo sapiens (Human).